The chain runs to 220 residues: Tumor protein p53-inducible nuclear protein 2 (220 aa).

Residues Met1–Thr12 are compositionally biased toward low complexity. Disordered stretches follow at residues Met1 to Ala24, Pro41 to Glu69, and Pro119 to Tyr220. Ser14 is modified (phosphoserine). Positions Val26–Pro41 match the LIR motif. The span at Pro47–Pro64 shows a compositional bias: pro residues. Ser136 is modified (phosphoserine). A compositionally biased stretch (low complexity) spans His152–Arg170. The segment covering Asn205–Tyr220 has biased composition (polar residues).

In terms of assembly, interacts with VMP1, GABARAP, GABARAPL1, GABARAPL2, MAP1LC3A, MAP1LC3B, MAP1LC3C and THRA.

It localises to the cytoplasm. Its subcellular location is the cytosol. It is found in the nucleus. The protein localises to the PML body. The protein resides in the cytoplasmic vesicle. It localises to the autophagosome. In terms of biological role, dual regulator of transcription and autophagy. Positively regulates autophagy and is required for autophagosome formation and processing. May act as a scaffold protein that recruits MAP1LC3A, GABARAP and GABARAPL2 and brings them to the autophagosome membrane by interacting with VMP1 where, in cooperation with the BECN1-PI3-kinase class III complex, they trigger autophagosome development. Acts as a transcriptional activator of THRA. In Homo sapiens (Human), this protein is Tumor protein p53-inducible nuclear protein 2 (TP53INP2).